The chain runs to 505 residues: ATP synthase subunit alpha (505 aa).

G169–T176 provides a ligand contact to ATP.

The protein belongs to the ATPase alpha/beta chains family. In terms of assembly, F-type ATPases have 2 components, CF(1) - the catalytic core - and CF(0) - the membrane proton channel. CF(1) has five subunits: alpha(3), beta(3), gamma(1), delta(1), epsilon(1). CF(0) has three main subunits: a(1), b(2) and c(9-12). The alpha and beta chains form an alternating ring which encloses part of the gamma chain. CF(1) is attached to CF(0) by a central stalk formed by the gamma and epsilon chains, while a peripheral stalk is formed by the delta and b chains.

It localises to the cell inner membrane. It catalyses the reaction ATP + H2O + 4 H(+)(in) = ADP + phosphate + 5 H(+)(out). Produces ATP from ADP in the presence of a proton gradient across the membrane. The alpha chain is a regulatory subunit. The polypeptide is ATP synthase subunit alpha (Desulfatibacillum aliphaticivorans).